The sequence spans 363 residues: Eukaryotic translation initiation factor 3 subunit H (363 aa).

Residues 13 to 163 (VQVEALVVMK…LRAFRLSTAF (151 aa)) form the MPN domain.

Belongs to the eIF-3 subunit H family. In terms of assembly, component of the eukaryotic translation initiation factor 3 (eIF-3) complex.

The protein resides in the cytoplasm. Its function is as follows. Component of the eukaryotic translation initiation factor 3 (eIF-3) complex, which is involved in protein synthesis of a specialized repertoire of mRNAs and, together with other initiation factors, stimulates binding of mRNA and methionyl-tRNAi to the 40S ribosome. The eIF-3 complex specifically targets and initiates translation of a subset of mRNAs involved in cell proliferation. The polypeptide is Eukaryotic translation initiation factor 3 subunit H (Pyricularia oryzae (strain 70-15 / ATCC MYA-4617 / FGSC 8958) (Rice blast fungus)).